We begin with the raw amino-acid sequence, 307 residues long: Bifunctional protein FolD 3 (307 aa).

NADP(+) is bound by residues 169–171 (GRS), Ser-194, and Ile-235.

Belongs to the tetrahydrofolate dehydrogenase/cyclohydrolase family. In terms of assembly, homodimer.

The enzyme catalyses (6R)-5,10-methylene-5,6,7,8-tetrahydrofolate + NADP(+) = (6R)-5,10-methenyltetrahydrofolate + NADPH. It carries out the reaction (6R)-5,10-methenyltetrahydrofolate + H2O = (6R)-10-formyltetrahydrofolate + H(+). Its pathway is one-carbon metabolism; tetrahydrofolate interconversion. Its function is as follows. Catalyzes the oxidation of 5,10-methylenetetrahydrofolate to 5,10-methenyltetrahydrofolate and then the hydrolysis of 5,10-methenyltetrahydrofolate to 10-formyltetrahydrofolate. The chain is Bifunctional protein FolD 3 from Ectopseudomonas mendocina (strain ymp) (Pseudomonas mendocina).